Here is a 204-residue protein sequence, read N- to C-terminus: Cell wall protein RHD3 (204 aa).

The first 15 residues, 1–15 (MKFLAILSLSSSALA), serve as a signal peptide directing secretion. G182 is lipidated: GPI-anchor amidated glycine. Residues 183-204 (AAGQNKLSYGVGMAAVVAGLVM) constitute a propeptide, removed in mature form.

It belongs to the SRP1/TIP1 family. Post-translationally, the GPI-anchor is attached to the protein in the endoplasmic reticulum and serves to target the protein to the cell surface. There, the glucosamine-inositol phospholipid moiety is cleaved off and the GPI-modified mannoprotein is covalently attached via its lipidless GPI glycan remnant to the 1,6-beta-glucan of the outer cell wall layer. O-glycosylated by PMT1.

The protein resides in the secreted. It localises to the cell wall. Its subcellular location is the membrane. Functionally, component of the cell wall involved in virulence. Does not seem to have a major role in maintaining cell wall integrity but plays a role in the relationship between C.albicans and the host. This is Cell wall protein RHD3 (RHD3) from Candida albicans (strain SC5314 / ATCC MYA-2876) (Yeast).